A 205-amino-acid chain; its full sequence is NADH-quinone oxidoreductase subunit C (205 aa).

This sequence belongs to the complex I 30 kDa subunit family. NDH-1 is composed of 14 different subunits. Subunits NuoB, C, D, E, F, and G constitute the peripheral sector of the complex.

The protein localises to the cell inner membrane. It carries out the reaction a quinone + NADH + 5 H(+)(in) = a quinol + NAD(+) + 4 H(+)(out). In terms of biological role, NDH-1 shuttles electrons from NADH, via FMN and iron-sulfur (Fe-S) centers, to quinones in the respiratory chain. The immediate electron acceptor for the enzyme in this species is believed to be ubiquinone. Couples the redox reaction to proton translocation (for every two electrons transferred, four hydrogen ions are translocated across the cytoplasmic membrane), and thus conserves the redox energy in a proton gradient. This is NADH-quinone oxidoreductase subunit C from Bartonella bacilliformis (strain ATCC 35685 / KC583 / Herrer 020/F12,63).